A 170-amino-acid polypeptide reads, in one-letter code: Adenine phosphoribosyltransferase (170 aa).

The protein belongs to the purine/pyrimidine phosphoribosyltransferase family. In terms of assembly, homodimer.

It is found in the cytoplasm. It catalyses the reaction AMP + diphosphate = 5-phospho-alpha-D-ribose 1-diphosphate + adenine. It participates in purine metabolism; AMP biosynthesis via salvage pathway; AMP from adenine: step 1/1. Its function is as follows. Catalyzes a salvage reaction resulting in the formation of AMP, that is energically less costly than de novo synthesis. The polypeptide is Adenine phosphoribosyltransferase (Flavobacterium johnsoniae (strain ATCC 17061 / DSM 2064 / JCM 8514 / BCRC 14874 / CCUG 350202 / NBRC 14942 / NCIMB 11054 / UW101) (Cytophaga johnsonae)).